A 565-amino-acid chain; its full sequence is Methionine--tRNA ligase (565 aa).

Positions 16 to 26 match the 'HIGH' region motif; that stretch reads PYAYGVPHLGN. Zn(2+) contacts are provided by Cys148, Cys151, Cys161, and Cys164. A 'KMSKS' region motif is present at residues 338-342; the sequence is KFSKS. Residue Lys341 participates in ATP binding.

It belongs to the class-I aminoacyl-tRNA synthetase family. MetG type 1 subfamily. Zn(2+) is required as a cofactor.

It is found in the cytoplasm. It catalyses the reaction tRNA(Met) + L-methionine + ATP = L-methionyl-tRNA(Met) + AMP + diphosphate. Functionally, is required not only for elongation of protein synthesis but also for the initiation of all mRNA translation through initiator tRNA(fMet) aminoacylation. The polypeptide is Methionine--tRNA ligase (Thermofilum pendens (strain DSM 2475 / Hrk 5)).